A 533-amino-acid chain; its full sequence is Portal protein B (533 aa).

Belongs to the siphoviridae portal protein family. Homododecamer. Interacts with the terminase complex composed of two small and one large terminase subunits. Proteolytically cleaved by the viral protease during capsid maturation.

The protein resides in the virion. Forms the portal vertex of the capsid. This portal plays critical roles in head assembly, genome packaging, neck/tail attachment, and genome ejection. The portal protein multimerizes as a single ring-shaped homododecamer arranged around a central channel. Binds to the terminase subunits to form the packaging machine. This chain is Portal protein B, found in Escherichia phage lambda (Bacteriophage lambda).